The chain runs to 614 residues: V-type proton ATPase catalytic subunit A isoform 2 (614 aa).

Residue Ser-142 is modified to Phosphoserine. Residue 247–254 (GAFGCGKT) coordinates ATP.

It belongs to the ATPase alpha/beta chains family. In terms of assembly, V-ATPase is a heteromultimeric enzyme made up of two complexes: the ATP-hydrolytic V1 complex and the proton translocation V0 complex. The V1 complex consists of three catalytic AB heterodimers that form a heterohexamer, three peripheral stalks each consisting of EG heterodimers, one central rotor including subunits D and F, and the regulatory subunits C and H. The proton translocation complex V0 consists of the proton transport subunit a, a ring of proteolipid subunits c9c'', rotary subunit d, subunits e and f, and the accessory subunits VhaAC45 and ATP6AP2.

It carries out the reaction ATP + H2O + 4 H(+)(in) = ADP + phosphate + 5 H(+)(out). With respect to regulation, ATP hydrolysis occurs at the interface between the nucleotide-binding domains of subunits A and B. ATP hydrolysis triggers a conformational change in the subunits D and F, which induces a shift of subunit d. The c-ring is subsequently rotated and results in a continuous proton translocation across the membrane. Catalytic subunit of the V1 complex of vacuolar(H+)-ATPase (V-ATPase), a multisubunit enzyme composed of a peripheral complex (V1) that hydrolyzes ATP and a membrane integral complex (V0) that translocates protons. V-ATPase is responsible for acidifying and maintaining the pH of intracellular compartments and in some cell types, is targeted to the plasma membrane, where it is responsible for acidifying the extracellular environment. The sequence is that of V-type proton ATPase catalytic subunit A isoform 2 (Vha68-2) from Drosophila melanogaster (Fruit fly).